Here is an 873-residue protein sequence, read N- to C-terminus: Zinc finger X-linked protein ZXDB (873 aa).

Disordered stretches follow at residues 1 to 23 (MEIP…GCPA), 48 to 120 (RGAQ…GGSR), 138 to 184 (VETV…LSAV), 240 to 259 (EPGV…GALI), and 301 to 330 (AEPA…GPAG). 2 stretches are compositionally biased toward gly residues: residues 14-23 (QGAGGGGCPA) and 85-120 (SGGG…GGSR). R89 bears the Omega-N-methylarginine mark. The segment covering 150-165 (VRREEAGAGPRPERRQ) has biased composition (basic and acidic residues). Residues 240 to 255 (EPGVAPFPQPQPPPQP) show a composition bias toward pro residues. The segment covering 316–327 (APAAAAAQSPRG) has biased composition (low complexity). 10 C2H2-type zinc fingers span residues 340–364 (YLCP…LLTH), 373–397 (FKCP…LQSH), 403–427 (FGCP…MKGH), 433–455 (FKCE…QRSH), 462–486 (YQCA…NRAH), 493–517 (FACS…LRSH), 523–547 (FLCD…KRKH), 553–577 (FTCP…SITH), 583–607 (FVCP…SKKH), and 616–641 (SRCP…TKRH). The segment at 340–646 (YLCPEAQCGQ…MTKRHNLSQD (307 aa)) is required for interaction with ZXDC. Positions 645 to 776 (QDLLAQLEAA…DMDDVSAGNV (132 aa)) are required for transcriptional activation.

The protein belongs to the ZXD family. In terms of assembly, self-associates. Interacts with ZXDC and CIITA.

The protein localises to the nucleus. Its function is as follows. Cooperates with CIITA to promote transcription of MHC class I and MHC class II genes. The sequence is that of Zinc finger X-linked protein ZXDB (Zxdb) from Mus musculus (Mouse).